A 404-amino-acid chain; its full sequence is Tryptophan synthase beta chain (404 aa).

An N6-(pyridoxal phosphate)lysine modification is found at Lys-91.

Belongs to the TrpB family. Tetramer of two alpha and two beta chains. Requires pyridoxal 5'-phosphate as cofactor.

The enzyme catalyses (1S,2R)-1-C-(indol-3-yl)glycerol 3-phosphate + L-serine = D-glyceraldehyde 3-phosphate + L-tryptophan + H2O. The protein operates within amino-acid biosynthesis; L-tryptophan biosynthesis; L-tryptophan from chorismate: step 5/5. Functionally, the beta subunit is responsible for the synthesis of L-tryptophan from indole and L-serine. This Clavibacter michiganensis subsp. michiganensis (strain NCPPB 382) protein is Tryptophan synthase beta chain.